The primary structure comprises 296 residues: 4-hydroxybenzoate octaprenyltransferase (296 aa).

The next 8 helical transmembrane spans lie at 28 to 48 (IGTLLLLWPTYWALWLASDGI), 51 to 71 (LAVLAAFTIGTFLMRSAGCVI), 102 to 122 (LLLTAFLCLLAALCLIPLNHL), 143 to 163 (FFPIPQLYLGLAFSFGIPMAF), 174 to 194 (AWILFAANVLWTLAYDTVYAM), 212 to 232 (FGRYDIAAVMLCHGGFTLLMA), 233 to 253 (VLGAVIGAAWAYWTAIPIVLL), and 274 to 294 (FLANNRIGWVWFTAIFAHTFF).

It belongs to the UbiA prenyltransferase family. Requires Mg(2+) as cofactor.

The protein localises to the cell inner membrane. The catalysed reaction is all-trans-octaprenyl diphosphate + 4-hydroxybenzoate = 4-hydroxy-3-(all-trans-octaprenyl)benzoate + diphosphate. The protein operates within cofactor biosynthesis; ubiquinone biosynthesis. In terms of biological role, catalyzes the prenylation of para-hydroxybenzoate (PHB) with an all-trans polyprenyl group. Mediates the second step in the final reaction sequence of ubiquinone-8 (UQ-8) biosynthesis, which is the condensation of the polyisoprenoid side chain with PHB, generating the first membrane-bound Q intermediate 3-octaprenyl-4-hydroxybenzoate. In Neisseria meningitidis serogroup B (strain ATCC BAA-335 / MC58), this protein is 4-hydroxybenzoate octaprenyltransferase.